A 333-amino-acid chain; its full sequence is 5-formaminoimidazole-4-carboxamide-1-(beta)-D-ribofuranosyl 5'-monophosphate synthetase (333 aa).

5-amino-1-(5-phospho-beta-D-ribosyl)imidazole-4-carboxamide contacts are provided by H21 and S84. The ATP-grasp domain occupies 118-313 (MELLAAAGIP…YFDEPMDMGE (196 aa)). ATP contacts are provided by residues 141–187 (PVIV…VPAY) and E209. 5-amino-1-(5-phospho-beta-D-ribosyl)imidazole-4-carboxamide is bound at residue N229. Residues E268 and E281 each coordinate Mg(2+).

Belongs to the phosphohexose mutase family. Mg(2+) serves as cofactor. Mn(2+) is required as a cofactor.

It carries out the reaction 5-amino-1-(5-phospho-beta-D-ribosyl)imidazole-4-carboxamide + formate + ATP = 5-formamido-1-(5-phospho-D-ribosyl)imidazole-4-carboxamide + ADP + phosphate. It functions in the pathway purine metabolism; IMP biosynthesis via de novo pathway; 5-formamido-1-(5-phospho-D-ribosyl)imidazole-4-carboxamide from 5-amino-1-(5-phospho-D-ribosyl)imidazole-4-carboxamide (formate route): step 1/1. In terms of biological role, catalyzes the ATP- and formate-dependent formylation of 5-aminoimidazole-4-carboxamide-1-beta-d-ribofuranosyl 5'-monophosphate (AICAR) to 5-formaminoimidazole-4-carboxamide-1-beta-d-ribofuranosyl 5'-monophosphate (FAICAR) in the absence of folates. This Pyrobaculum calidifontis (strain DSM 21063 / JCM 11548 / VA1) protein is 5-formaminoimidazole-4-carboxamide-1-(beta)-D-ribofuranosyl 5'-monophosphate synthetase.